Consider the following 344-residue polypeptide: Estradiol 17-beta-dehydrogenase 1 (344 aa).

3–32 contributes to the NAD(+) binding site; the sequence is STVVLITGCSSGIGLHLAVRLASDRSQSFK. Serine 143 is a binding site for substrate. Tyrosine 156 functions as the Proton acceptor in the catalytic mechanism.

It belongs to the short-chain dehydrogenases/reductases (SDR) family. As to quaternary structure, homodimer.

It localises to the cytoplasm. It catalyses the reaction 17beta-estradiol + NAD(+) = estrone + NADH + H(+). It carries out the reaction 17beta-estradiol + NADP(+) = estrone + NADPH + H(+). It participates in steroid biosynthesis; estrogen biosynthesis. Favors the reduction of estrogens and androgens. Uses preferentially NADH. The polypeptide is Estradiol 17-beta-dehydrogenase 1 (Hsd17b1) (Rattus norvegicus (Rat)).